We begin with the raw amino-acid sequence, 256 residues long: Homeobox protein Hox-D13a (256 aa).

The homeobox DNA-binding region spans 191-250 (GRKKRVPYTKFQLKELEREYNTTKFITKENRRRIASSTNLSERQVTIWFQNRRVKDKKRP).

The protein belongs to the Abd-B homeobox family.

It localises to the nucleus. Its function is as follows. Sequence-specific transcription factor which is part of a developmental regulatory system that provides cells with specific positional identities on the anterior-posterior axis. In Danio rerio (Zebrafish), this protein is Homeobox protein Hox-D13a (hoxd13a).